Here is a 219-residue protein sequence, read N- to C-terminus: Imidazole glycerol phosphate synthase subunit HisH (219 aa).

One can recognise a Glutamine amidotransferase type-1 domain in the interval 2-218 (KVVVIDSGTG…MVWTPEGTSG (217 aa)). The active-site Nucleophile is the C87. Residues H193 and E195 contribute to the active site.

In terms of assembly, heterodimer of HisH and HisF.

It localises to the cytoplasm. The catalysed reaction is 5-[(5-phospho-1-deoxy-D-ribulos-1-ylimino)methylamino]-1-(5-phospho-beta-D-ribosyl)imidazole-4-carboxamide + L-glutamine = D-erythro-1-(imidazol-4-yl)glycerol 3-phosphate + 5-amino-1-(5-phospho-beta-D-ribosyl)imidazole-4-carboxamide + L-glutamate + H(+). It catalyses the reaction L-glutamine + H2O = L-glutamate + NH4(+). The protein operates within amino-acid biosynthesis; L-histidine biosynthesis; L-histidine from 5-phospho-alpha-D-ribose 1-diphosphate: step 5/9. IGPS catalyzes the conversion of PRFAR and glutamine to IGP, AICAR and glutamate. The HisH subunit catalyzes the hydrolysis of glutamine to glutamate and ammonia as part of the synthesis of IGP and AICAR. The resulting ammonia molecule is channeled to the active site of HisF. The protein is Imidazole glycerol phosphate synthase subunit HisH of Granulibacter bethesdensis (strain ATCC BAA-1260 / CGDNIH1).